Reading from the N-terminus, the 398-residue chain is Ureide permease 2 (398 aa).

Residues 1 to 10 (MYLVESKGGA) are Extracellular-facing. The chain crosses the membrane as a helical span at residues 11–31 (IACMLLALLSLGTWPAVLTLL). Topologically, residues 32-44 (ERRGRLPQHTYLD) are cytoplasmic. A helical membrane pass occupies residues 45–65 (YSITNLLAAIIIAFTFGQIGS). Residues 66 to 81 (TKPDSPNFITQLAQDN) lie on the Extracellular side of the membrane. A helical membrane pass occupies residues 82-102 (WPSVMFAMAGGIVLSLGNLST). At 103–104 (QY) the chain is on the cytoplasmic side. The helical transmembrane segment at 105–125 (AWALVGLSVTEVITSSITVVI) threads the bilayer. Residues 126-139 (GSTLNYFLDDKINK) lie on the Extracellular side of the membrane. A helical transmembrane segment spans residues 140–160 (AEILFPGVACFLIAVCLGSAV). At 161 to 229 (HRSNADDNKA…RAIKVFGKRK (69 aa)) the chain is on the cytoplasmic side. Residues 176–200 (ETAKQEASGPSTEIGTNSSKDLETN) form a disordered region. A compositionally biased stretch (polar residues) spans 183–200 (SGPSTEIGTNSSKDLETN). 221-228 (AIKVFGKR) contributes to the ATP binding site. The helical transmembrane segment at 230-250 (IIGLAITFFAGLCFSLFSPAF) threads the bilayer. Topologically, residues 251 to 272 (NLATNDQWNRLKQGVPKLVVYT) are extracellular. Residues 273–293 (AFFYFSVSCFIIALILNVVFL) traverse the membrane as a helical segment. The Cytoplasmic portion of the chain corresponds to 294-315 (YYPVLGLPKSSFKAYLNDWNGR). Residues 316–336 (YWAFLAGFLCGFGNGLQFMGG) traverse the membrane as a helical segment. The Extracellular segment spans residues 337–341 (QAAGY). The chain crosses the membrane as a helical span at residues 342–362 (AAADSVQALPLVSTFWGVVLF). The Cytoplasmic portion of the chain corresponds to 363-371 (GEYRRSSRK). A helical membrane pass occupies residues 372-392 (TYLLLFCMLFMFISAVAVLMA). The Extracellular portion of the chain corresponds to 393-398 (SSGHRK).

The protein belongs to the plant ureide permease (TC 2.A.7.19) family. In terms of tissue distribution, expressed in root xylem, cotyledons and leaves. Expressed in leaf blades, petioles, trichomes, stems, flower stigma, the upper part of pedicels, sepals, and the top and bottom parts of carpels in siliques.

It is found in the membrane. Its function is as follows. Proton-coupled transporter that transports a wide spectrum of oxo derivatives of heterocyclic nitrogen compounds, including allantoin, uric acid and xanthine, but not adenine. Mediates high affinity transport of uracil and 5-fluorouracil (a toxic uracil analog). Mediates transport of free pyrimidines and may function during early seedling development in salvage pathways, by the utilization of pyrimidines from seed storage tissue. This is Ureide permease 2 from Arabidopsis thaliana (Mouse-ear cress).